The following is a 306-amino-acid chain: Ankyrin repeat domain-containing protein 23 (306 aa).

Residues 41–90 are a coiled coil; it reads QEAVAREKLKLEEEKRKKLERFNSSRLTLDNLTDLENLVQRRRKKRQRHK. The disordered stretch occupies residues 78-107; sequence LVQRRRKKRQRHKVPPREPESGAEPQPQVP. Over residues 80–91 the composition is skewed to basic residues; it reads QRRRKKRQRHKV. ANK repeat units follow at residues 144–173, 177–206, 210–239, and 243–272; these read LHRTALHWACLKGHRQLVNKLLAAGAAIEV, LDRTPVFWACRGGHLDILKRLLNQGAQVNA, IWSTPLHVAVRMGHSDCLEHLIECGAHINA, and EGDTALHEAVRYGHHKATKLLLLYGAKLGV. The interaction with TTN stretch occupies residues 179 to 196; the sequence is RTPVFWACRGGHLDILKR.

Interacts with titin/TTN and MYPN.

It is found in the nucleus. Its function is as follows. May be involved in the energy metabolism. Could be a molecular link between myofibrillar stretch-induced signaling pathways and muscle gene expression. The chain is Ankyrin repeat domain-containing protein 23 (Ankrd23) from Mus musculus (Mouse).